The primary structure comprises 86 residues: Weak neurotoxin WNTX34 (86 aa).

An N-terminal signal peptide occupies residues 1–21 (MKTLLLTLVVVTIVCLDLGYS). 5 cysteine pairs are disulfide-bonded: Cys-24-Cys-45, Cys-27-Cys-32, Cys-38-Cys-63, Cys-67-Cys-78, and Cys-79-Cys-84.

The protein belongs to the three-finger toxin family. Ancestral subfamily. Orphan group II sub-subfamily. In terms of tissue distribution, expressed by the venom gland.

Its subcellular location is the secreted. In terms of biological role, binds with low affinity to muscular (alpha-1-beta-1-delta-epsilon/CHRNA1-CHRNB1-CHRND-CHRNE) and very low affinity to neuronal (alpha-7/CHRNA7) nicotinic acetylcholine receptor (nAChR). This chain is Weak neurotoxin WNTX34, found in Ophiophagus hannah (King cobra).